The following is a 370-amino-acid chain: UDP-N-acetylglucosamine--N-acetylmuramyl-(pentapeptide) pyrophosphoryl-undecaprenol N-acetylglucosamine transferase (370 aa).

UDP-N-acetyl-alpha-D-glucosamine-binding positions include 15–17 (TGG), Asn-129, Arg-171, Ser-200, Ile-256, and Gln-301.

It belongs to the glycosyltransferase 28 family. MurG subfamily.

It is found in the cell membrane. It catalyses the reaction di-trans,octa-cis-undecaprenyl diphospho-N-acetyl-alpha-D-muramoyl-L-alanyl-D-glutamyl-meso-2,6-diaminopimeloyl-D-alanyl-D-alanine + UDP-N-acetyl-alpha-D-glucosamine = di-trans,octa-cis-undecaprenyl diphospho-[N-acetyl-alpha-D-glucosaminyl-(1-&gt;4)]-N-acetyl-alpha-D-muramoyl-L-alanyl-D-glutamyl-meso-2,6-diaminopimeloyl-D-alanyl-D-alanine + UDP + H(+). It participates in cell wall biogenesis; peptidoglycan biosynthesis. Functionally, cell wall formation. Catalyzes the transfer of a GlcNAc subunit on undecaprenyl-pyrophosphoryl-MurNAc-pentapeptide (lipid intermediate I) to form undecaprenyl-pyrophosphoryl-MurNAc-(pentapeptide)GlcNAc (lipid intermediate II). This Caldicellulosiruptor saccharolyticus (strain ATCC 43494 / DSM 8903 / Tp8T 6331) protein is UDP-N-acetylglucosamine--N-acetylmuramyl-(pentapeptide) pyrophosphoryl-undecaprenol N-acetylglucosamine transferase.